Consider the following 785-residue polypeptide: uncharacterized protein (785 aa).

The span at K53–L65 shows a compositional bias: polar residues. The interval K53 to I162 is disordered. Acidic residues predominate over residues A66–A79. Polar residues predominate over residues S81–G94. Position 215 is a phosphoserine (S215). Disordered regions lie at residues K571–N590 and D631–F657. The span at S575 to E584 shows a compositional bias: acidic residues. A Phosphoserine modification is found at S667. The disordered stretch occupies residues D693–G785. Residues R725 to R739 show a composition bias toward basic residues. Positions F776–G785 are enriched in low complexity.

This is an uncharacterized protein from Saccharomyces cerevisiae (strain ATCC 204508 / S288c) (Baker's yeast).